We begin with the raw amino-acid sequence, 250 residues long: MPITANTLYRDTMNFTRNQFISILMMSLLTAFITVILNHALSPSVDELRILSSSGSDLSSSVESGLMDLIQQMTPEQQTVLLKMSAAGTFAALVGNVLLTGGVLMLIQLVSDGHRTSALRAIGASTPFLLRLLFLILLCTLLIQLGMMLLVIPGVLLAIALSLSPVIVVTEKSGIFSAIKASTKLAYGNLRATAPAIVMWLLAKIAILLVVSKLPISSPTVLGVVLNGLSNLISAILLIYLFRLYMLLRA.

A run of 6 helical transmembrane segments spans residues 20–40 (FISILMMSLLTAFITVILNHA), 90–110 (FAALVGNVLLTGGVLMLIQLV), 132–152 (LLFLILLCTLLIQLGMMLLVI), 156–176 (LLAIALSLSPVIVVTEKSGIF), 192–212 (ATAPAIVMWLLAKIAILLVVS), and 222–242 (LGVVLNGLSNLISAILLIYLF).

This sequence belongs to the UPF0259 family.

Its subcellular location is the cell inner membrane. The protein is UPF0259 membrane protein PC1_1998 of Pectobacterium carotovorum subsp. carotovorum (strain PC1).